The sequence spans 439 residues: Tol-Pal system protein TolB (439 aa).

The signal sequence occupies residues 1 to 22 (MKKPLRWLAALTVLLLPLSALA).

The protein belongs to the TolB family. In terms of assembly, the Tol-Pal system is composed of five core proteins: the inner membrane proteins TolA, TolQ and TolR, the periplasmic protein TolB and the outer membrane protein Pal. They form a network linking the inner and outer membranes and the peptidoglycan layer.

The protein localises to the periplasm. Functionally, part of the Tol-Pal system, which plays a role in outer membrane invagination during cell division and is important for maintaining outer membrane integrity. The protein is Tol-Pal system protein TolB of Xanthomonas oryzae pv. oryzae (strain MAFF 311018).